Here is an 85-residue protein sequence, read N- to C-terminus: Large ribosomal subunit protein bL27 (85 aa).

The disordered stretch occupies residues 1–25 (MAHKKGVGSSRNGRDSNPKMLGVKR).

This sequence belongs to the bacterial ribosomal protein bL27 family.

This chain is Large ribosomal subunit protein bL27, found in Roseiflexus castenholzii (strain DSM 13941 / HLO8).